We begin with the raw amino-acid sequence, 304 residues long: UDP-N-acetylenolpyruvoylglucosamine reductase (304 aa).

Residues arginine 33 to glycine 198 enclose the FAD-binding PCMH-type domain. Arginine 177 is a catalytic residue. The Proton donor role is filled by serine 227. The active site involves glutamate 297.

The protein belongs to the MurB family. It depends on FAD as a cofactor.

The protein localises to the cytoplasm. The enzyme catalyses UDP-N-acetyl-alpha-D-muramate + NADP(+) = UDP-N-acetyl-3-O-(1-carboxyvinyl)-alpha-D-glucosamine + NADPH + H(+). Its pathway is cell wall biogenesis; peptidoglycan biosynthesis. In terms of biological role, cell wall formation. This is UDP-N-acetylenolpyruvoylglucosamine reductase from Clostridium perfringens (strain ATCC 13124 / DSM 756 / JCM 1290 / NCIMB 6125 / NCTC 8237 / Type A).